The primary structure comprises 277 residues: Inner kinetochore subunit sim4 (277 aa).

Residues 96–138 are a coiled coil; that stretch reads NNISDLKKNLHSNKKLEAVLKEELHQIKKFSSDLQSLKSSMGE.

It belongs to the CENP-K/MCM22 family. In terms of assembly, component of the inner kinetochore constitutive centromere-associated network (CCAN) (also known as central kinetochore Sim4 complex in fission yeast), which is composed of at least cnl2, cnp3, cnp20, fta1, fta2, fta3, fta4, fta6, fta7, mal2, mhf1, mhf2, mis6, mis15, mis17, sim4 and wip1. Interacts with mis6 and dad1.

It localises to the nucleus. It is found in the chromosome. Its subcellular location is the centromere. Component of the kinetochore, a multiprotein complex that assembles on centromeric DNA and attaches chromosomes to spindle microtubules, mediating chromosome segregation and sister chromatid segregation during meiosis and mitosis. Component of the inner kinetochore constitutive centromere-associated network (CCAN), which serves as a structural platform for outer kinetochore assembly. The sequence is that of Inner kinetochore subunit sim4 (sim4) from Schizosaccharomyces pombe (strain 972 / ATCC 24843) (Fission yeast).